Here is a 358-residue protein sequence, read N- to C-terminus: Plastoglobulin-1, chloroplastic (358 aa).

A chloroplast-targeting transit peptide spans 1–47 (MALLSSTLRAPLVFSKNPKPVSLSSLHSRIYLSPRSPRFPSLRFISA). Positions 48 to 114 (AGDTGDAEKP…NDAGNGTPTF (67 aa)) are disordered.

Belongs to the PAP/fibrillin family.

The protein resides in the plastid. It is found in the chloroplast. In terms of biological role, may form together with other plastoglobulins a coat on the surface of the lipoprotein particle. The coat may contain receptors for attachment to the thylakoid membrane as well as regulatory proteins that may function in the transfer of lipids to and from the thylakoid membranes. In Pisum sativum (Garden pea), this protein is Plastoglobulin-1, chloroplastic (PG1).